The primary structure comprises 647 residues: Threonine--tRNA ligase (647 aa).

The 61-residue stretch at 1 to 61 folds into the TGS domain; it reads MINITFPDGA…TEDGSIEIVT (61 aa). The tract at residues 242 to 540 is catalytic; sequence DHRKLGKELD…LIENYKGAFP (299 aa). Cys-336, His-387, and His-517 together coordinate Zn(2+).

It belongs to the class-II aminoacyl-tRNA synthetase family. Homodimer. The cofactor is Zn(2+).

It localises to the cytoplasm. The enzyme catalyses tRNA(Thr) + L-threonine + ATP = L-threonyl-tRNA(Thr) + AMP + diphosphate + H(+). Its function is as follows. Catalyzes the attachment of threonine to tRNA(Thr) in a two-step reaction: L-threonine is first activated by ATP to form Thr-AMP and then transferred to the acceptor end of tRNA(Thr). Also edits incorrectly charged L-seryl-tRNA(Thr). This is Threonine--tRNA ligase from Streptococcus pneumoniae serotype 19F (strain G54).